The chain runs to 712 residues: DNA ligase (712 aa).

The disordered stretch occupies residues 1–22 (MVQKNEHQGGQSQHSLFAAGPT). Residues 53–57 (DDQFD) and Asp138 each bind NAD(+). Catalysis depends on Lys140, which acts as the N6-AMP-lysine intermediate. 4 residues coordinate NAD(+): Arg161, Glu199, Lys318, and Lys342. Residues Cys436, Cys439, Cys454, and Cys459 each coordinate Zn(2+). Residues 612 to 631 (RGGRSGGGSSGSTGEGGLAS) form a disordered region. Positions 614 to 630 (GRSGGGSSGSTGEGGLA) are enriched in gly residues. Residues 629-712 (LASGPLAGKN…MLREAKAASE (84 aa)) form the BRCT domain.

It belongs to the NAD-dependent DNA ligase family. LigA subfamily. Mg(2+) serves as cofactor. Mn(2+) is required as a cofactor.

The enzyme catalyses NAD(+) + (deoxyribonucleotide)n-3'-hydroxyl + 5'-phospho-(deoxyribonucleotide)m = (deoxyribonucleotide)n+m + AMP + beta-nicotinamide D-nucleotide.. In terms of biological role, DNA ligase that catalyzes the formation of phosphodiester linkages between 5'-phosphoryl and 3'-hydroxyl groups in double-stranded DNA using NAD as a coenzyme and as the energy source for the reaction. It is essential for DNA replication and repair of damaged DNA. This Desulfovibrio desulfuricans (strain ATCC 27774 / DSM 6949 / MB) protein is DNA ligase.